The sequence spans 625 residues: 1-deoxy-D-xylulose-5-phosphate synthase (625 aa).

Residues His-74 and 115-117 (GHS) contribute to the thiamine diphosphate site. Asp-146 provides a ligand contact to Mg(2+). Thiamine diphosphate is bound by residues 147 to 148 (GA), Asn-175, Tyr-286, and Glu-367. Asn-175 contributes to the Mg(2+) binding site.

The protein belongs to the transketolase family. DXPS subfamily. Homodimer. Mg(2+) serves as cofactor. It depends on thiamine diphosphate as a cofactor.

It carries out the reaction D-glyceraldehyde 3-phosphate + pyruvate + H(+) = 1-deoxy-D-xylulose 5-phosphate + CO2. The protein operates within metabolic intermediate biosynthesis; 1-deoxy-D-xylulose 5-phosphate biosynthesis; 1-deoxy-D-xylulose 5-phosphate from D-glyceraldehyde 3-phosphate and pyruvate: step 1/1. Catalyzes the acyloin condensation reaction between C atoms 2 and 3 of pyruvate and glyceraldehyde 3-phosphate to yield 1-deoxy-D-xylulose-5-phosphate (DXP). The sequence is that of 1-deoxy-D-xylulose-5-phosphate synthase from Lachnoclostridium phytofermentans (strain ATCC 700394 / DSM 18823 / ISDg) (Clostridium phytofermentans).